Consider the following 212-residue polypeptide: Peptide methionine sulfoxide reductase MsrA (212 aa).

Cys52 is a catalytic residue.

It belongs to the MsrA Met sulfoxide reductase family.

It carries out the reaction L-methionyl-[protein] + [thioredoxin]-disulfide + H2O = L-methionyl-(S)-S-oxide-[protein] + [thioredoxin]-dithiol. It catalyses the reaction [thioredoxin]-disulfide + L-methionine + H2O = L-methionine (S)-S-oxide + [thioredoxin]-dithiol. Its function is as follows. Has an important function as a repair enzyme for proteins that have been inactivated by oxidation. Catalyzes the reversible oxidation-reduction of methionine sulfoxide in proteins to methionine. This Salmonella newport (strain SL254) protein is Peptide methionine sulfoxide reductase MsrA.